We begin with the raw amino-acid sequence, 283 residues long: Glutamate racemase (283 aa).

Residues 28 to 29 (DS) and 60 to 61 (YG) each bind substrate. Catalysis depends on cysteine 92, which acts as the Proton donor/acceptor. Residue 93-94 (NT) coordinates substrate. Cysteine 204 serves as the catalytic Proton donor/acceptor. 205–206 (TH) provides a ligand contact to substrate.

This sequence belongs to the aspartate/glutamate racemases family.

The catalysed reaction is L-glutamate = D-glutamate. It participates in cell wall biogenesis; peptidoglycan biosynthesis. Its function is as follows. Provides the (R)-glutamate required for cell wall biosynthesis. This is Glutamate racemase from Salmonella choleraesuis (strain SC-B67).